The primary structure comprises 268 residues: AB hydrolase superfamily protein YisY (268 aa).

The 232-residue stretch at 23-254 (PIIFLHGWPL…NSGHGAFYEE (232 aa)) folds into the AB hydrolase-1 domain. Residues Ser96, Asp220, and His248 contribute to the active site.

Belongs to the AB hydrolase superfamily.

In Bacillus subtilis (strain 168), this protein is AB hydrolase superfamily protein YisY (yisY).